The following is a 182-amino-acid chain: UPF0690 protein C1orf52 (182 aa).

2 disordered regions span residues 1-67 and 100-182; these read MAAE…RSVT and WKSN…KKKK. Over residues 23 to 32 the composition is skewed to acidic residues; that stretch reads SDEEDNIEPE. Residues 50–63 show a composition bias toward basic and acidic residues; it reads NKAEKRLPGPDELF. T67 is subject to Phosphothreonine. Residue Y132 is modified to Phosphotyrosine. The segment covering 151-162 has biased composition (acidic residues); sequence EGEETLESDDEK. Position 158 is a phosphoserine (S158). The span at 172-182 shows a compositional bias: basic and acidic residues; it reads VEPGEPAKKKK.

The protein belongs to the UPF0690 family. In terms of tissue distribution, expressed in all tissues tested including heart, placenta, liver, skeletal muscle, kidney and pancreas. Weak expression in brain and lung.

The sequence is that of UPF0690 protein C1orf52 (C1orf52) from Homo sapiens (Human).